The chain runs to 364 residues: Alpha-2-HS-glycoprotein (364 aa).

The segment at residues 1–15 (MKSFLLLFCLAQLCS) is a signal peptide (or 17). Residues 27 to 133 (YKEPACDDPD…QFSVLFTKCD (107 aa)) form the Cystatin fetuin-A-type 1 domain. 6 cysteine pairs are disulfide-bonded: Cys-32–Cys-355, Cys-89–Cys-100, Cys-114–Cys-132, Cys-146–Cys-149, Cys-208–Cys-219, and Cys-230–Cys-248. A glycan (N-linked (GlcNAc...) asparagine) is linked at Asn-99. Ser-134, Ser-135, and Ser-138 each carry phosphoserine. A Cystatin fetuin-A-type 2 domain is found at 144–256 (KLCPDCPLLA…TCTLFQTQPV (113 aa)). N-linked (GlcNAc...) asparagine glycans are attached at residues Asn-156 and Asn-176. The O-linked (GalNAc...) serine glycan is linked to Ser-301. At Thr-319 the chain carries Phosphothreonine. Ser-321, Ser-325, Ser-328, and Ser-330 each carry phosphoserine. Thr-339 carries O-linked (GalNAc...) threonine glycosylation.

This sequence belongs to the fetuin family. Phosphorylated by FAM20C in the extracellular medium.

Its subcellular location is the secreted. This is Alpha-2-HS-glycoprotein (AHSG) from Ovis aries (Sheep).